We begin with the raw amino-acid sequence, 339 residues long: Nitrilase 2 (339 aa).

Position 2 is an N-acetylserine (Ser-2). A CN hydrolase domain is found at 18 to 290 (VRATIVQAST…EGLITADLDL (273 aa)). Glu-58 acts as the Proton acceptor in catalysis. Lys-145 (proton donor) is an active-site residue. Cys-179 (nucleophile) is an active-site residue.

The protein belongs to the carbon-nitrogen hydrolase superfamily. Nitrilase family.

The protein localises to the cell membrane. It catalyses the reaction a nitrile + 2 H2O = a carboxylate + NH4(+). Functionally, can convert indole-3-acetonitrile to the plant hormone indole-3-acetic acid. The protein is Nitrilase 2 (NIT2) of Arabidopsis thaliana (Mouse-ear cress).